A 249-amino-acid chain; its full sequence is RNA-free ribonuclease P (249 aa).

The tract at residues 226-249 is disordered; the sequence is NENEPEYENRDKSKEGSSGEIEFI. Over residues 232–242 the composition is skewed to basic and acidic residues; that stretch reads YENRDKSKEGS.

The protein belongs to the HARP family.

It carries out the reaction Endonucleolytic cleavage of RNA, removing 5'-extranucleotides from tRNA precursor.. RNA-free RNase P that catalyzes the removal of the 5'-leader sequence from pre-tRNA to produce the mature 5'-terminus. The chain is RNA-free ribonuclease P from Methanosarcina barkeri (strain Fusaro / DSM 804).